Consider the following 328-residue polypeptide: MSRTVIIGSRDSQLALVQTHWVRDELQRAHPDIRFEIVEMKTQGDKILDVALAKIGDKGLFTKELESAMLEKRTDLAVHSLKDLPTALPPGLILGAITEREDPSDAVIVRRGLEAAGLADLPEGAVVGTSSLRRLAQLKHHYGERLRFQDIRGNLNTRLRKLDEGRYDAIVLAVAGMRRLGWSERISEVLSPDISLHAVGQGALGIECREADGEILDLLTVLNHPPTARRCRAERAMLRALEGGCQVPIGVYTELDDSGRLTLQGIVASLDGRNMARACRSGPGDAPEALGRAVAEDLKAAGAQAILDQIFVLVRSPGVIAPGAAPAS.

Residue C245 is modified to S-(dipyrrolylmethanemethyl)cysteine.

Belongs to the HMBS family. As to quaternary structure, monomer. Requires dipyrromethane as cofactor.

The catalysed reaction is 4 porphobilinogen + H2O = hydroxymethylbilane + 4 NH4(+). The protein operates within porphyrin-containing compound metabolism; protoporphyrin-IX biosynthesis; coproporphyrinogen-III from 5-aminolevulinate: step 2/4. It functions in the pathway porphyrin-containing compound metabolism; chlorophyll biosynthesis. Functionally, tetrapolymerization of the monopyrrole PBG into the hydroxymethylbilane pre-uroporphyrinogen in several discrete steps. This chain is Porphobilinogen deaminase, found in Gloeobacter violaceus (strain ATCC 29082 / PCC 7421).